A 710-amino-acid polypeptide reads, in one-letter code: Secretin OutD (710 aa).

Positions 1–27 are cleaved as a signal peptide; it reads MLGKGIKKSWGWLGLTVLLLGSPCGWA. An N0 region spans residues 28-105; sequence AEFSASFKGT…DNGVLKVIRS (78 aa). The segment at 123–190 is N1; sequence IGDELVTRVV…DIVNTVDKTG (68 aa). The N2 stretch occupies residues 192–262; that stretch reads REMVTVPLTY…VEMIRQLDRK (71 aa). The segment at 288-399 is N3; the sequence is GNGTSGNRNS…INQLDIRRPQ (112 aa). Residues 289-353 form a disordered region; that stretch reads NGTSGNRNSS…AFGSTSSSGG (65 aa). Positions 401–648 are secretin; it reads LVEAIIAEIQ…MLFLRPTIIR (248 aa). A s domain region spans residues 691 to 710; sequence TYTFRQVQSSISDFYKPEGR.

Belongs to the bacterial secretin family. GSP D subfamily. As to quaternary structure, forms a cylindrical channel with 15 subunits. Interacts with pilotin OutS.

Its subcellular location is the cell outer membrane. In terms of biological role, involved in a type II secretion system (T2SS, formerly general secretion pathway, GSP) for the export of proteins. Required for the translocation of the multiple pectic enzymes. This subunit forms the outer membrane channel. In Dickeya dadantii (strain 3937) (Erwinia chrysanthemi (strain 3937)), this protein is Secretin OutD (outD).